The chain runs to 287 residues: mRNA-capping enzyme regulatory subunit (287 aa).

This sequence belongs to the chordopoxvirinae mRNA-capping enzyme regulatory subunit family. In terms of assembly, heterodimer of a catalytic and a regulatory subunit. Intrinsic methyltransferase activity of the catalytic subunit is weak and needs to be stimulated 30- to 50-fold by the regulatory subunit, which is itself catalytically inert.

Its subcellular location is the virion. Regulatory subunit of the mRNA cap enzyme which stabilizes the catalytic subunit and enhances its methyltransferase activity through an allosteric mechanism. Heterodimeric mRNA capping enzyme catalyzes the linkage of a N7-methyl-guanosine moiety to the first transcribed nucleotide (cap 0 structure), whereas the polymerase associated VP39 is responsible for a second methylation at the 2'-O position of the ribose (cap 1 structure). Functionally, the heterodimeric enzyme is also involved in early viral gene transcription termination and intermediate viral gene transcription initiation. Early gene transcription termination requires the termination factor VTF, the DNA-dependent ATPase NPH-I and the Rap94 subunit of the viral RNA polymerase, as well as the presence of a specific termination motif. Binds, together with RAP94, to the termination motif 5'-UUUUUNU-3' in the nascent early mRNA. This Vaccinia virus (strain Ankara) (VACV) protein is mRNA-capping enzyme regulatory subunit.